A 457-amino-acid chain; its full sequence is Carboxypeptidase N catalytic chain (457 aa).

The first 23 residues, Met-1–Phe-23, serve as a signal peptide directing secretion. In terms of domain architecture, Peptidase M14 spans Arg-24 to Val-338. An intrachain disulfide couples Cys-42 to Cys-104. Positions 86, 89, and 216 each coordinate Zn(2+). Cys-271 and Cys-311 are joined by a disulfide. The active-site Proton donor/acceptor is Glu-308. Thr-400, Thr-402, and Thr-409 each carry an O-linked (GalNAc...) threonine glycan. The interval Ser-418–Ala-457 is disordered.

Belongs to the peptidase M14 family. Tetramer of two catalytic chains and two glycosylated inactive chains. Requires Zn(2+) as cofactor. In terms of tissue distribution, mainly expressed in liver. Also detected in lung, stomach, intestine, spleen and kidney.

It is found in the secreted. It localises to the extracellular space. The catalysed reaction is Release of a C-terminal basic amino acid, preferentially lysine.. Functionally, protects the body from potent vasoactive and inflammatory peptides containing C-terminal Arg or Lys (such as kinins or anaphylatoxins) which are released into the circulation. The polypeptide is Carboxypeptidase N catalytic chain (Cpn1) (Mus musculus (Mouse)).